A 253-amino-acid polypeptide reads, in one-letter code: uncharacterized protein (253 aa).

NADP(+) is bound by residues Ile17, Ser36, Asp62, Asn89, Tyr158, Lys162, Val191, and Thr193. Tyr158 acts as the Proton donor in catalysis. Lys162 (lowers pKa of active site Tyr) is an active-site residue.

This sequence belongs to the short-chain dehydrogenases/reductases (SDR) family.

The protein localises to the cytoplasm. Its subcellular location is the nucleus. This is an uncharacterized protein from Schizosaccharomyces pombe (strain 972 / ATCC 24843) (Fission yeast).